A 31-amino-acid chain; its full sequence is Nemertide alpha-4 (31 aa).

3 cysteine pairs are disulfide-bonded: Cys-2/Cys-16, Cys-9/Cys-20, and Cys-15/Cys-26. Pro-28 and Pro-29 each carry 4-hydroxyproline.

The protein belongs to the nemertide family. In terms of tissue distribution, confined to the epidermis and to the mucus layer.

Its subcellular location is the secreted. Its function is as follows. Potent toxin, demonstrating strong inhibitory effects on insect sodium channels (Nav) and reduced activity on mammalian sodium channels. Potently inhibits inactivation of insect sodium channels of B.germanica (BgNav1) (EC(50)=11.1 nM). Also delays the inactivation of most mammalian Nav (human Nav1.1/SCN1A; EC(50)=92 nM, rat Nav1.2/SCN2A; EC(50)=134.2 nM, rat Nav1.3/SCN3A; EC(50)=12.9 nM, rat Nav1.4/SCN4A; EC(50)=14.6 nM, human Nav1.5/SCN5A; EC(50)=27.8 nM, mouse Nav1.6/SCN8A; EC(50)=123.6 nM, human Nav1.9/SCN9A; EC(50)=80.5 nM). Inactivation is completely prevented by a concentration of 1 uM, resulting in sustained, non-inactivating currents. In addition, the toxin significantly enhances the recovery from inactivation, and the open state is not required for the toxin to interact with the channel. In vivo, injection into brine shrimp (Artemia salina) stops movement or causes death after 24 hours (EC(50)=0.4 uM). This Lineus sanguineus (Ribbon worm) protein is Nemertide alpha-4.